The primary structure comprises 211 residues: Protein-L-isoaspartate O-methyltransferase (211 aa).

Ser62 is a catalytic residue.

This sequence belongs to the methyltransferase superfamily. L-isoaspartyl/D-aspartyl protein methyltransferase family.

The protein resides in the cytoplasm. It catalyses the reaction [protein]-L-isoaspartate + S-adenosyl-L-methionine = [protein]-L-isoaspartate alpha-methyl ester + S-adenosyl-L-homocysteine. In terms of biological role, catalyzes the methyl esterification of L-isoaspartyl residues in peptides and proteins that result from spontaneous decomposition of normal L-aspartyl and L-asparaginyl residues. It plays a role in the repair and/or degradation of damaged proteins. The sequence is that of Protein-L-isoaspartate O-methyltransferase from Shewanella woodyi (strain ATCC 51908 / MS32).